The following is a 407-amino-acid chain: Transcriptional regulator ICP22 homolog (407 aa).

The tract at residues Arg34–Leu268 is disordered. The span at Glu81–Ala241 shows a compositional bias: acidic residues.

Belongs to the herpesviridae ICP22 family.

The polypeptide is Transcriptional regulator ICP22 homolog (73) (Saimiriine herpesvirus 2 (strain 11) (SaHV-2)).